A 249-amino-acid chain; its full sequence is tRNA pseudouridine synthase A (249 aa).

Aspartate 53 serves as the catalytic Nucleophile. Tyrosine 111 is a substrate binding site.

Belongs to the tRNA pseudouridine synthase TruA family. As to quaternary structure, homodimer.

The enzyme catalyses uridine(38/39/40) in tRNA = pseudouridine(38/39/40) in tRNA. In terms of biological role, formation of pseudouridine at positions 38, 39 and 40 in the anticodon stem and loop of transfer RNAs. The protein is tRNA pseudouridine synthase A of Streptococcus equi subsp. zooepidemicus (strain MGCS10565).